The primary structure comprises 324 residues: Putative HTH-type transcriptional regulatory protein UNCMA_15260 (324 aa).

The 58-residue stretch at 132 to 189 (LRSLREAKNISLGELAMALGVSRRTISKYESGMNATIEAALKLEEILDAPIACPVNMI) folds into the HTH cro/C1-type domain. Residues 143–162 (LGELAMALGVSRRTISKYES) constitute a DNA-binding region (H-T-H motif).

The polypeptide is Putative HTH-type transcriptional regulatory protein UNCMA_15260 (Methanocella arvoryzae (strain DSM 22066 / NBRC 105507 / MRE50)).